A 229-amino-acid chain; its full sequence is Cytidylate kinase (229 aa).

Position 10–18 (10–18) interacts with ATP; sequence GYSSCGKST.

Belongs to the cytidylate kinase family. Type 1 subfamily.

The protein resides in the cytoplasm. It catalyses the reaction CMP + ATP = CDP + ADP. The enzyme catalyses dCMP + ATP = dCDP + ADP. The sequence is that of Cytidylate kinase from Phocaeicola vulgatus (strain ATCC 8482 / DSM 1447 / JCM 5826 / CCUG 4940 / NBRC 14291 / NCTC 11154) (Bacteroides vulgatus).